A 460-amino-acid polypeptide reads, in one-letter code: tRNA modification GTPase MnmE (460 aa).

The (6S)-5-formyl-5,6,7,8-tetrahydrofolate site is built by arginine 22, glutamate 87, and arginine 126. Residues 222–381 form the TrmE-type G domain; it reads GLKTAIIGKP…LENTIYNLVF (160 aa). Residue asparagine 232 participates in K(+) binding. GTP contacts are provided by residues 232–237, 251–257, and 276–279; these read NVGKSS, TDIPGTT, and DTAG. Serine 236 contributes to the Mg(2+) binding site. The K(+) site is built by threonine 251, isoleucine 253, and threonine 256. Threonine 257 serves as a coordination point for Mg(2+). Position 460 (lysine 460) interacts with (6S)-5-formyl-5,6,7,8-tetrahydrofolate.

The protein belongs to the TRAFAC class TrmE-Era-EngA-EngB-Septin-like GTPase superfamily. TrmE GTPase family. As to quaternary structure, homodimer. Heterotetramer of two MnmE and two MnmG subunits. Requires K(+) as cofactor.

The protein resides in the cytoplasm. Functionally, exhibits a very high intrinsic GTPase hydrolysis rate. Involved in the addition of a carboxymethylaminomethyl (cmnm) group at the wobble position (U34) of certain tRNAs, forming tRNA-cmnm(5)s(2)U34. The protein is tRNA modification GTPase MnmE of Thermoanaerobacter sp. (strain X514).